Consider the following 251-residue polypeptide: Ubiquinone/menaquinone biosynthesis C-methyltransferase UbiE (251 aa).

Residues threonine 74, aspartate 95, and 123–124 contribute to the S-adenosyl-L-methionine site; that span reads NA.

This sequence belongs to the class I-like SAM-binding methyltransferase superfamily. MenG/UbiE family.

It catalyses the reaction a 2-demethylmenaquinol + S-adenosyl-L-methionine = a menaquinol + S-adenosyl-L-homocysteine + H(+). It carries out the reaction a 2-methoxy-6-(all-trans-polyprenyl)benzene-1,4-diol + S-adenosyl-L-methionine = a 5-methoxy-2-methyl-3-(all-trans-polyprenyl)benzene-1,4-diol + S-adenosyl-L-homocysteine + H(+). The protein operates within quinol/quinone metabolism; menaquinone biosynthesis; menaquinol from 1,4-dihydroxy-2-naphthoate: step 2/2. Its pathway is cofactor biosynthesis; ubiquinone biosynthesis. In terms of biological role, methyltransferase required for the conversion of demethylmenaquinol (DMKH2) to menaquinol (MKH2) and the conversion of 2-polyprenyl-6-methoxy-1,4-benzoquinol (DDMQH2) to 2-polyprenyl-3-methyl-6-methoxy-1,4-benzoquinol (DMQH2). The sequence is that of Ubiquinone/menaquinone biosynthesis C-methyltransferase UbiE from Shewanella halifaxensis (strain HAW-EB4).